Here is a 493-residue protein sequence, read N- to C-terminus: MLPYMDQVLRAFYQSTHWSTQNSYEDITATSRTLLDFRIPSAIHLQISNKSTPNTFNSLDFSTRSRINGSLSYLYSDAQQLENFMRNSTDIPLQDATETYRQLQPNLNFSVSSGNTLSSDNTTVDNDKKLLHDSKFVKKSLYYGRMYYPSSDLEAMIIKRLNPQTQFMLKGVSSFKESLNVLTCYFQRDSHRNLQEWIFSTSDLLCGYRVLHNFLTTPSKFNTSLYNNSSLSLGAEFWLGLVSLSPGCSTTLRYYTHSTNTGRPLTLTLSWNPLFGHISSTYSAKTGTNSTFCAKYDFNLYSIESNLSFGCEFWQKKHHLLETNKNNNDKLEPISDELVDINSNSRATKLLHENVPDLNLAVNDIPSTLDIPVHKQKLLNDLTYAFSSSLRKIDEERSTIEKFDNKINSSIFTSVWKLSTSLRDKTLKLLWEGKWRGFLISAGTELVFTRGFQESLSDDEKNDNAISISATDTENGNIPVFPTKFGIQFQYST.

It belongs to the MDM10 family. As to quaternary structure, component of the ER-mitochondria encounter structure (ERMES) or MDM complex, composed of MMM1, MDM10, MDM12 and MDM34. Associates with the mitochondrial outer membrane sorting assembly machinery SAM(core) complex, which consists of SAM35, SAM37 and SAM50, to form a SAM(holo) complex.

Its subcellular location is the mitochondrion outer membrane. In terms of biological role, component of the ERMES/MDM complex, which serves as a molecular tether to connect the endoplasmic reticulum and mitochondria. Components of this complex are involved in the control of mitochondrial shape and protein biogenesis and may function in phospholipid exchange. MDM10 is involved in the late assembly steps of the general translocase of the mitochondrial outer membrane (TOM complex). Functions in the TOM40-specific route of the assembly of outer membrane beta-barrel proteins, including the association of TOM40 with the receptor TOM22 and small TOM proteins. Can associate with the SAM(core) complex as well as the MDM12-MMM1 complex, both involved in late steps of the major beta-barrel assembly pathway, that is responsible for biogenesis of all outer membrane beta-barrel proteins. May act as a switch that shuttles between both complexes and channels precursor proteins into the TOM40-specific pathway. Plays a role in mitochondrial morphology and in the inheritance of mitochondria. This is Mitochondrial distribution and morphology protein 10 from Saccharomyces cerevisiae (strain RM11-1a) (Baker's yeast).